We begin with the raw amino-acid sequence, 2155 residues long: Polyketide synthase 2 (2155 aa).

The interval 7–244 is N-terminal acylcarrier protein transacylase domain (SAT); the sequence is FIFGDQTGGF…IPIPIWAPYH (238 aa). A Ketosynthase family 3 (KS3) domain is found at 374-807; sequence DSKIAIIGMS…GGNSALLLED (434 aa). Catalysis depends on for beta-ketoacyl synthase activity residues C546, H681, and H723. Residues 908-1213 are malonyl-CoA:ACP transacylase (MAT) domain; sequence GFVFSGQGAQ…ASLHRKDDGW (306 aa). S998 serves as the catalytic For acyl/malonyl transferase activity. Residues 1290–1605 form a product template (PT) domain region; the sequence is TSSVQRIIRQ…RSLLNKVLPP (316 aa). The N-terminal hotdog fold stretch occupies residues 1294–1428; it reads QRIIRQTDGP…CLLRFADPTS (135 aa). Residues 1294–1600 enclose the PKS/mFAS DH domain; that stretch reads QRIIRQTDGP…FLGMSRSLLN (307 aa). H1327 serves as the catalytic Proton acceptor; for dehydratase activity. The tract at residues 1455-1600 is C-terminal hotdog fold; sequence TDSLLSKGIV…FLGMSRSLLN (146 aa). The active-site Proton donor; for dehydratase activity is D1514. The interval 1626 to 1654 is disordered; the sequence is AASAKDTERRPLDIPTRAQRQPSSPQTGT. The segment covering 1643–1654 has biased composition (polar residues); sequence AQRQPSSPQTGT. The 78-residue stretch at 1649–1726 folds into the Carrier 1 domain; sequence SPQTGTMGRI…ELKAFLGADQ (78 aa). Position 1686 is an O-(pantetheine 4'-phosphoryl)serine (S1686). The tract at residues 1735-1765 is disordered; the sequence is SSIGQHTPQTSDKGSGTLASQKTDGDTGPDT. Residues 1736–1756 are compositionally biased toward polar residues; it reads SIGQHTPQTSDKGSGTLASQK. The 75-residue stretch at 1764-1838 folds into the Carrier 2 domain; the sequence is DTTLNRVCAI…ALQKALCGSE (75 aa). O-(pantetheine 4'-phosphoryl)serine is present on S1798. The segment at 1873–2149 is thioesterase (TE) domain; the sequence is ASPPHATSIL…MVEMGNLIGD (277 aa). Residue S1979 is the For thioesterase activity of the active site.

Polyketide synthase; part of the Pks2 gene cluster that mediates the formation of infectious structures (appressoria), enabling these fungi to kill insects faster. The product of the Pks2 gene cluster is different from the one of Pks1 and has still not been identified. The protein is Polyketide synthase 2 of Metarhizium anisopliae (strain ARSEF 549).